A 623-amino-acid chain; its full sequence is Protein vein (623 aa).

The N-terminal stretch at 1–40 (MYAQHLRKWSLKTKKQLMPLILLIISYMLLLNTCVLSSSA) is a signal peptide. Disordered stretches follow at residues 70–98 (IPLSSDNGSGSSESSAESGSSSSRSSSNN), 130–162 (DAGSSTPAQQEQHVAAVPEQQQQQQQQQQSMQK), 184–214 (AASSKMRRHIQPSQLPHQPESRAQLPSNYSS), and 229–317 (PESM…QRYN). Low complexity-rich tracts occupy residues 72-98 (LSSDNGSGSSESSAESGSSSSRSSSNN) and 136-158 (PAQQEQHVAAVPEQQQQQQQQQQ). Asparagine 76 carries an N-linked (GlcNAc...) asparagine glycan. Residue asparagine 211 is glycosylated (N-linked (GlcNAc...) asparagine). A compositionally biased stretch (basic and acidic residues) spans 233–248 (LEDRSPEQAARSRRDG). Asparagine 252 is a glycosylation site (N-linked (GlcNAc...) asparagine). Low complexity predominate over residues 255–267 (RQQQRTGHRQQLQ). Positions 305–316 (QRRKHQRKHQRY) are enriched in basic residues. Residues asparagine 350, asparagine 381, asparagine 424, asparagine 449, asparagine 521, and asparagine 574 are each glycosylated (N-linked (GlcNAc...) asparagine). Residues 457-542 (TKIFSKPSKA…AKNKASKAIA (86 aa)) form the Ig-like C2-type domain. Cystine bridges form between cysteine 478–cysteine 531, cysteine 566–cysteine 577, cysteine 571–cysteine 588, and cysteine 590–cysteine 599. Residues 561–599 (ASGIPCNFDYCFHNGTCRMIPDINEVYCRCPTEYFGNRC) form the EGF-like domain.

The protein localises to the secreted. Ligand for the EGF receptor. Seems to play a role in the global proliferation of wing disc cells and the larval patterning. Shows a strong synergistic genetic interaction with spi, suggesting a molecular interdependence. Required for the development of interveins cells. The polypeptide is Protein vein (vn) (Drosophila melanogaster (Fruit fly)).